The sequence spans 329 residues: Sex comb on midleg-like protein 1 (329 aa).

Residues Ser138 and Ser238 each carry the phosphoserine modification. Positions 138-157 (SPTLPVSRRENNSPSNLPRP) are disordered. The SAM domain maps to 258–325 (WSVEAVVLFL…YYIDRLKQGK (68 aa)).

The protein belongs to the SCM family. As to expression, ubiquitous. Expressed in fetal and adult tissues.

It is found in the nucleus. Putative Polycomb group (PcG) protein. PcG proteins act by forming multiprotein complexes, which are required to maintain the transcriptionally repressive state of homeotic genes throughout development. May be involved in spermatogenesis during sexual maturation. The chain is Sex comb on midleg-like protein 1 (SCML1) from Homo sapiens (Human).